A 738-amino-acid polypeptide reads, in one-letter code: 1,4-alpha-glucan branching enzyme GlgB (738 aa).

Catalysis depends on Asp-399, which acts as the Nucleophile. Catalysis depends on Glu-452, which acts as the Proton donor.

It belongs to the glycosyl hydrolase 13 family. GlgB subfamily. Monomer.

It carries out the reaction Transfers a segment of a (1-&gt;4)-alpha-D-glucan chain to a primary hydroxy group in a similar glucan chain.. It functions in the pathway glycan biosynthesis; glycogen biosynthesis. Catalyzes the formation of the alpha-1,6-glucosidic linkages in glycogen by scission of a 1,4-alpha-linked oligosaccharide from growing alpha-1,4-glucan chains and the subsequent attachment of the oligosaccharide to the alpha-1,6 position. In Chlamydia trachomatis serovar A (strain ATCC VR-571B / DSM 19440 / HAR-13), this protein is 1,4-alpha-glucan branching enzyme GlgB.